The following is a 333-amino-acid chain: Glyoxylate reductase (333 aa).

NADP(+) is bound by residues 158–161 (FGRI), 180–182 (SRS), and 239–241 (IAR). Residues Arg-241 and Glu-270 contribute to the active site. His-288 acts as the Proton donor in catalysis. Residue 288 to 290 (HIG) coordinates NADP(+).

Belongs to the D-isomer specific 2-hydroxyacid dehydrogenase family. GyaR subfamily. As to quaternary structure, homodimer.

It is found in the cytoplasm. It catalyses the reaction glycolate + NAD(+) = glyoxylate + NADH + H(+). The polypeptide is Glyoxylate reductase (Thermococcus kodakarensis (strain ATCC BAA-918 / JCM 12380 / KOD1) (Pyrococcus kodakaraensis (strain KOD1))).